The chain runs to 509 residues: MRTKQVPVLWACFLLWSLYIASSQTVYPGITARITQRALDYGLQVGMKVLEQLAKEIVIPDLNGSESLKFLKIDYVKYNFSNIKINAFSFPNTSLAFVPGVGIRALSNHGTANISTNWSVKAPLFRDSGAANLFLSGIYFTGIVAFTRNDFGYPALELQDCHVQVSHARVSFFGSLSALYNSFAEPMEKPILKNLNEMVQLCPIAISQVEQFNVNISALEVLTKIDNYTVLDCSLISPPEITENHLDFNLKGAFYPLESLVDPPFTPAPFHLPESRDSMLYIGISEYFFKSASFAHYVSGALGTTLSTREISNYFSQNVQGFGSVLSKIAEIYVLSQPFILQMMATGPPMVNLQRNNFSLEFPAAVIMLTQLDNSTIQPIVSMDFVASTSVGLAILGQKLICSLSLNRFRLSLPENSQRDAKVVRFENILSSILHFGVLPLANTKLQQGFPLPNPYNISFINSDIEVLEGYLLVSSDLAYDTSSKPQPNLNSWGDLNLVHRPWREQPTH.

An N-terminal signal peptide occupies residues 1-23; the sequence is MRTKQVPVLWACFLLWSLYIASS. N-linked (GlcNAc...) asparagine glycans are attached at residues Asn63, Asn79, Asn92, Asn113, and Asn117. A disulfide bridge links Cys161 with Cys202. N-linked (GlcNAc...) asparagine glycans are attached at residues Asn215, Asn227, Asn357, Asn374, and Asn457.

It belongs to the BPI/LBP/Plunc superfamily. BPI/LBP family.

It is found in the secreted. This is BPI fold-containing family C protein (Bpifc) from Mus musculus (Mouse).